The primary structure comprises 219 residues: Multiple organellar RNA editing factor 2, chloroplastic (219 aa).

A chloroplast-targeting transit peptide spans Met1–Arg48. The segment at Val182–Arg219 is disordered. A compositionally biased stretch (basic and acidic residues) spans Ser185–Arg219.

It belongs to the MORF family. In terms of assembly, homodimer and heterodimer with MORF9. Interacts with protoporphyrinogen oxidase 1 PPOX1. Heterodimers with MORF8/RIP1 and MORF9/RIP9. Interacts with PCMP-A2/PMD1. Interacts with ORRM1. Interacts with ORRM6.

It is found in the plastid. The protein localises to the chloroplast. Involved in plastid rRNA processing and consequently in translation and early chloroplast differentiation. Involved in organellar RNA editing. Required for the processing of multiple editing sites in plastids. The protein is Multiple organellar RNA editing factor 2, chloroplastic of Arabidopsis thaliana (Mouse-ear cress).